Consider the following 326-residue polypeptide: Phosphate acyltransferase (326 aa).

Belongs to the PlsX family. In terms of assembly, homodimer. Probably interacts with PlsY.

It localises to the cytoplasm. The catalysed reaction is a fatty acyl-[ACP] + phosphate = an acyl phosphate + holo-[ACP]. The protein operates within lipid metabolism; phospholipid metabolism. Catalyzes the reversible formation of acyl-phosphate (acyl-PO(4)) from acyl-[acyl-carrier-protein] (acyl-ACP). This enzyme utilizes acyl-ACP as fatty acyl donor, but not acyl-CoA. This is Phosphate acyltransferase from Thermus thermophilus (strain ATCC BAA-163 / DSM 7039 / HB27).